Consider the following 286-residue polypeptide: Bifunctional protein FolD (286 aa).

NADP(+)-binding positions include 166-168 (GAS) and isoleucine 232.

It belongs to the tetrahydrofolate dehydrogenase/cyclohydrolase family. In terms of assembly, homodimer.

It carries out the reaction (6R)-5,10-methylene-5,6,7,8-tetrahydrofolate + NADP(+) = (6R)-5,10-methenyltetrahydrofolate + NADPH. It catalyses the reaction (6R)-5,10-methenyltetrahydrofolate + H2O = (6R)-10-formyltetrahydrofolate + H(+). The protein operates within one-carbon metabolism; tetrahydrofolate interconversion. Catalyzes the oxidation of 5,10-methylenetetrahydrofolate to 5,10-methenyltetrahydrofolate and then the hydrolysis of 5,10-methenyltetrahydrofolate to 10-formyltetrahydrofolate. This is Bifunctional protein FolD from Marinobacter nauticus (strain ATCC 700491 / DSM 11845 / VT8) (Marinobacter aquaeolei).